The chain runs to 143 residues: Ponticulin (143 aa).

Positions 1–22 (MLVLRNLLALVTLALLFTLSSA) are cleaved as a signal peptide. Residue Asn111 is glycosylated (N-linked (GlcNAc...) asparagine). Residue Ser118 is the site of GPI-like-anchor amidated serine attachment. The propeptide at 119–143 (SSGSTVMIGLASSLLFAFATLLALF) is removed in mature form.

It belongs to the ponticulin family. In terms of assembly, monomer. In terms of processing, disulfide bond(s) stabilize the native, actin-binding conformation of ponticulin. The GPI-like-anchor contains a phosphoceramide group, rather than a phosphatidyl group.

Its subcellular location is the cell membrane. In terms of biological role, binds F-actin and nucleates actin assembly. Major high affinity link between the plasma membrane and the cortical actin network. This is Ponticulin (ponA) from Dictyostelium discoideum (Social amoeba).